A 374-amino-acid chain; its full sequence is Probable neutral protease 2 homolog TRV_05367 (374 aa).

Positions 1-19 are cleaved as a signal peptide; that stretch reads MQVIVALAALGSLAAPALG. The propeptide occupies 20-189; it reads FSIPRGVPVS…RGPLTRINKR (170 aa). Intrachain disulfides connect cysteine 197–cysteine 267 and cysteine 274–cysteine 292. Histidine 317 lines the Zn(2+) pocket. Glutamate 318 is a catalytic residue. Zn(2+)-binding residues include histidine 321 and aspartate 332.

Belongs to the peptidase M35 family. Zn(2+) serves as cofactor.

Its subcellular location is the secreted. The enzyme catalyses Preferential cleavage of bonds with hydrophobic residues in P1'. Also 3-Asn-|-Gln-4 and 8-Gly-|-Ser-9 bonds in insulin B chain.. Its function is as follows. Probable secreted metalloprotease that shows high activities on basic nuclear substrates such as histone and protamine. May be involved in virulence. The polypeptide is Probable neutral protease 2 homolog TRV_05367 (Trichophyton verrucosum (strain HKI 0517)).